The chain runs to 391 residues: NADH-quinone oxidoreductase subunit D (391 aa).

This sequence belongs to the complex I 49 kDa subunit family. As to quaternary structure, NDH-1 is composed of 14 different subunits. Subunits NuoB, C, D, E, F, and G constitute the peripheral sector of the complex.

It is found in the cell inner membrane. The enzyme catalyses a quinone + NADH + 5 H(+)(in) = a quinol + NAD(+) + 4 H(+)(out). In terms of biological role, NDH-1 shuttles electrons from NADH, via FMN and iron-sulfur (Fe-S) centers, to quinones in the respiratory chain. The immediate electron acceptor for the enzyme in this species is believed to be ubiquinone. Couples the redox reaction to proton translocation (for every two electrons transferred, four hydrogen ions are translocated across the cytoplasmic membrane), and thus conserves the redox energy in a proton gradient. The protein is NADH-quinone oxidoreductase subunit D of Rickettsia conorii (strain ATCC VR-613 / Malish 7).